A 377-amino-acid polypeptide reads, in one-letter code: Phospho-N-acetylmuramoyl-pentapeptide-transferase (377 aa).

11 consecutive transmembrane segments (helical) span residues tyrosine 9 to glycine 29, threonine 59 to alanine 79, phenylalanine 85 to tyrosine 105, phenylalanine 122 to alanine 142, tryptophan 155 to phenylalanine 175, valine 178 to threonine 198, glycine 210 to valine 230, alanine 247 to phenylalanine 267, valine 274 to isoleucine 294, isoleucine 299 to valine 319, and glutamine 354 to leucine 374.

It belongs to the glycosyltransferase 4 family. MraY subfamily. Mg(2+) is required as a cofactor.

It localises to the cell inner membrane. The catalysed reaction is UDP-N-acetyl-alpha-D-muramoyl-L-alanyl-gamma-D-glutamyl-meso-2,6-diaminopimeloyl-D-alanyl-D-alanine + di-trans,octa-cis-undecaprenyl phosphate = di-trans,octa-cis-undecaprenyl diphospho-N-acetyl-alpha-D-muramoyl-L-alanyl-D-glutamyl-meso-2,6-diaminopimeloyl-D-alanyl-D-alanine + UMP. Its pathway is cell wall biogenesis; peptidoglycan biosynthesis. In terms of biological role, catalyzes the initial step of the lipid cycle reactions in the biosynthesis of the cell wall peptidoglycan: transfers peptidoglycan precursor phospho-MurNAc-pentapeptide from UDP-MurNAc-pentapeptide onto the lipid carrier undecaprenyl phosphate, yielding undecaprenyl-pyrophosphoryl-MurNAc-pentapeptide, known as lipid I. The protein is Phospho-N-acetylmuramoyl-pentapeptide-transferase of Bordetella bronchiseptica (strain ATCC BAA-588 / NCTC 13252 / RB50) (Alcaligenes bronchisepticus).